Reading from the N-terminus, the 40-residue chain is Spodomicin (40 aa).

3 disulfides stabilise this stretch: C6–C20, C10–C32, and C21–C39.

As to quaternary structure, monomer. In terms of processing, contains three disulfide bonds. As to expression, hemolymph.

Its subcellular location is the secreted. Fungicide. The protein is Spodomicin of Spodoptera littoralis (Egyptian cotton leafworm).